The chain runs to 339 residues: Ferrochelatase (339 aa).

Residues His209 and Glu290 each coordinate Fe cation.

This sequence belongs to the ferrochelatase family.

The protein resides in the cytoplasm. The enzyme catalyses heme b + 2 H(+) = protoporphyrin IX + Fe(2+). The protein operates within porphyrin-containing compound metabolism; protoheme biosynthesis; protoheme from protoporphyrin-IX: step 1/1. Its function is as follows. Catalyzes the ferrous insertion into protoporphyrin IX. This Rhizobium meliloti (strain 1021) (Ensifer meliloti) protein is Ferrochelatase.